The following is a 598-amino-acid chain: Protein HIGH CHLOROPHYLL FLUORESCENCE PHENOTYPE 173, chloroplastic (598 aa).

The transit peptide at 1–79 directs the protein to the chloroplast; sequence MVGSIVGSNM…ITTKESEETV (79 aa). The disordered stretch occupies residues 42 to 106; sequence VIPRAQSSSS…PTLKLDDVNP (65 aa). The segment covering 73-84 has biased composition (basic and acidic residues); that stretch reads KESEETVAKKLD. Residues 87-97 are compositionally biased toward pro residues; that stretch reads PPSPQSPPSPP.

This sequence belongs to the NmrA-type oxidoreductase family. In terms of assembly, component of a high molecular weight complex containing psbA mRNA, OHP1, OHP2 and HCF244, and PSII core proteins D1/D2, HCF136 and HCF173. Interacts with LPE1.

The protein localises to the plastid. It localises to the chloroplast membrane. The protein resides in the chloroplast thylakoid membrane. It is found in the chloroplast stroma. Auxiliary factor required, together with HCF244, for the biogenesis of photosystem II (PSII), especially for the synthesis of the reaction center proteins (e.g. D1), via the regulation of the corresponding mRNA (e.g. psbA) translation initiation (ribosomal loading) and stabilization. The protein is Protein HIGH CHLOROPHYLL FLUORESCENCE PHENOTYPE 173, chloroplastic of Arabidopsis thaliana (Mouse-ear cress).